The primary structure comprises 413 residues: Probable elongation factor 1-gamma 2 (413 aa).

A GST N-terminal domain is found at Met-1–Ser-82. The GST C-terminal domain maps to Ser-87 to Val-215. The segment at Lys-207 to Leu-260 is disordered. The EF-1-gamma C-terminal domain occupies Ala-253–Lys-413.

As to quaternary structure, EF-1 is composed of four subunits: alpha, beta, delta, and gamma.

Its function is as follows. Probably plays a role in anchoring the complex to other cellular components. The protein is Probable elongation factor 1-gamma 2 of Arabidopsis thaliana (Mouse-ear cress).